We begin with the raw amino-acid sequence, 369 residues long: Coiled-coil domain-containing protein 149 (369 aa).

Residues 1-249 (MKENNNAEIL…AKYKQMAEAV (249 aa)) are a coiled coil.

It belongs to the CCDC149 family. Expressed in amphid and phasmid ciliated neurons, and also pharyngeal, touch receptor and motor neurons.

The protein resides in the cell projection. It is found in the cilium. The protein is Coiled-coil domain-containing protein 149 of Caenorhabditis elegans.